A 592-amino-acid polypeptide reads, in one-letter code: Pyruvate decarboxylase 3 (592 aa).

Residues D54 and H141 each contribute to the substrate site. The segment at 419-501 (DSWFNCQKLK…FLINNGGYTI (83 aa)) is thiamine pyrophosphate binding. Mg(2+) contacts are provided by D469, N496, and G498. E502 contributes to the substrate binding site.

The protein belongs to the TPP enzyme family. In terms of assembly, homotetramer. A metal cation is required as a cofactor. Requires thiamine diphosphate as cofactor. Expressed at low levels in roots and shoots.

It carries out the reaction a 2-oxocarboxylate + H(+) = an aldehyde + CO2. The polypeptide is Pyruvate decarboxylase 3 (PDC3) (Arabidopsis thaliana (Mouse-ear cress)).